A 1034-amino-acid chain; its full sequence is MDDWRSTISTQERSQFVTELAQILADMSRINGGEKANFNLEKLKKSAEQFESSLYASCNSKDLYLDAMRKRIAAMDSAKRKSIEAQRQKLAQAQAQAQAVQRQQQQQQQQHHMQQQGSGQQQANGIPANINAQMFLNQQAQARQQAQRQIRSTLTGQQQQQPMPQQPQPQQQQPNMMRPQLTLQQQQQLANELKVTEIPRELLQKIPNLPPGITTWPQITFWAQKNRPSQNDLIITKKVYQLHQQLLNKSKLQQSNVNRMNTSVQQPGMGVQQSPNQRMNMNQVPQQQQQVRQQQQQQQQQQQQQHKQQPQHQEPPAVLGRLNQVFTQAEQKMLYEAGKKMIENLQRSGKLPPNLDSQQQLLYIKKYMNQMVLKKMQQLGIPIPMPGSAQQQSQLLQQQQQQQQQQQQQQRQQQIPQVQQAPLQQPQVQPPQSQQAQSRRQAMGMKPTPVIPNAGVMKPQPQQTPQNIQQPMMQQQSSPPPQQQQQQQQQSKISVPRPTEQDMLALKKLNAEVTKNPVKLNDITNRLTNDQKQQIRSKLHANQQLFSSVESFIPTLYMLTRNEEHIRQLLQIRMLTREIMEKAVRGVFLVEPNVVDKVIFRYQKYYEYTKEQLLRRQQQLMTMRQMQNNNPNLTANDLLNQQQLLQNRKLNLAMQSQTQEPPQIAAQQQQPQQPISGVNNNSNMGIVLDSSLNATSRSGTNTMEFLNSPEFSAISPAVPSPNKDKKNPATRAVKGKKNSQSGIPTSNPQSNSNASVVNSRTATPTVIPGSSPMFNNKSLASGQQNSPSPKTMINSPPQQDNPYKNDELALKKMAIRTAELMSRYKHRKEVFVMSSIDLFLSTFADCLDIKDDAVDLVHKTPQPILDQINGTGKKKLSKAAQKARDQDPVEISVRNNKLLMPSKSEKTLRSFKIPIADITACFKPFADPKQLILNSTPKHDEKKRKFDDLEISPTDSSSELMSESKKVKFDSPDDMFLNDPSSVQETKPLVPSELGMYSINSKPSIPSSAGNMPAPNESTDSGMNIWDWNYWESL.

Composition is skewed to low complexity over residues 101 to 123 (QRQQ…QQQA), 138 to 149 (QQAQARQQAQRQ), 157 to 183 (QQQQ…QLTL), 281 to 312 (MNQV…QPQH), 413 to 441 (QQIP…SRRQ), 459 to 490 (PQPQ…QQQQ), and 655 to 675 (QSQT…QQPI). Disordered stretches follow at residues 101 to 124 (QRQQ…QQAN), 138 to 183 (QQAQ…QLTL), 281 to 315 (MNQV…HQEP), 413 to 497 (QQIP…SVPR), 655 to 682 (QSQT…NNNS), 712 to 804 (SAIS…NPYK), and 951 to 1020 (ISPT…ESTD). 2 stretches are compositionally biased toward polar residues: residues 738–764 (NSQS…TATP) and 772–802 (PMFN…QDNP). Residues 962-971 (SESKKVKFDS) are compositionally biased toward basic and acidic residues. The segment covering 998–1020 (SINSKPSIPSSAGNMPAPNESTD) has biased composition (polar residues).

This sequence belongs to the Mediator complex subunit 15 family. Component of the Mediator complex.

The protein resides in the nucleus. Functionally, component of the Mediator complex, a coactivator involved in the regulated transcription of nearly all RNA polymerase II-dependent genes. Mediator functions as a bridge to convey information from gene-specific regulatory proteins to the basal RNA polymerase II transcription machinery. Mediator is recruited to promoters by direct interactions with regulatory proteins and serves as a scaffold for the assembly of a functional preinitiation complex with RNA polymerase II and the general transcription factors. Required for transcription of genes encoding galactose-metabolizing enzymes. Essential for normal growth on nonfermentable carbon sources, for sporulation and mating. This Kluyveromyces lactis (strain ATCC 8585 / CBS 2359 / DSM 70799 / NBRC 1267 / NRRL Y-1140 / WM37) (Yeast) protein is Mediator of RNA polymerase II transcription subunit 15 (GAL11).